Consider the following 80-residue polypeptide: Protein Vpu (80 aa).

Residues 1–6 lie on the Extracellular side of the membrane; it reads MYILGL. Residues 7–27 traverse the membrane as a helical segment; the sequence is GIGALVVTFIIAVIVWTIVYI. The Cytoplasmic portion of the chain corresponds to 28–80; that stretch reads EYKKLVRQKKIDRLIERIGERAEDSGNESDGDTEELSKLMEMGHLNLGYVADL. A phosphoserine; by host CK2 mark is found at Ser-52 and Ser-56.

Belongs to the HIV-1 VPU protein family. Homopentamer. Interacts with host CD4 and BRTC; these interactions induce proteasomal degradation of CD4. Interacts with host BST2; this interaction leads to the degradation of host BST2. Interacts with host FBXW11. Interacts with host AP1M1; this interaction plays a role in the mistrafficking and subsequent degradation of host BST2. Interacts with host RANBP2; this interaction allows Vpu to down-regulate host BLM sumoylation. Post-translationally, phosphorylated by host CK2. This phosphorylation is necessary for interaction with human BTRC and degradation of CD4.

The protein resides in the host membrane. With respect to regulation, ion channel activity is inhibited by hexamethylene amiloride in vitro. Enhances virion budding by targeting host CD4 and Tetherin/BST2 to proteasome degradation. Degradation of CD4 prevents any unwanted premature interactions between viral Env and its host receptor CD4 in the endoplasmic reticulum. Degradation of antiretroviral protein Tetherin/BST2 is important for virion budding, as BST2 tethers new viral particles to the host cell membrane. Mechanistically, Vpu bridges either CD4 or BST2 to BTRC, a substrate recognition subunit of the Skp1/Cullin/F-box protein E3 ubiquitin ligase, induces their ubiquitination and subsequent proteasomal degradation. The alteration of the E3 ligase specificity by Vpu seems to promote the degradation of host IKBKB, leading to NF-kappa-B down-regulation and subsequent apoptosis. Acts as a viroporin that forms an oligomeric ion channel in membranes. Modulates the host DNA repair mechanisms to promote degradation of nuclear viral cDNA in cells that are already productively infected in order to suppress immune sensing and proviral hyper-integration (superinfection). Manipulates PML-NBs and modulates SUMOylation of host BLM protein thereby enhancing its DNA-end processing activity toward viral unintegrated linear DNA. Also inhibits RAD52-mediated homologous repair of viral cDNA, preventing the generation of dead-end circular forms of single copies of the long terminal repeat and permitting sustained nucleolytic attack. In Human immunodeficiency virus type 1 group M subtype H (isolate 90CF056) (HIV-1), this protein is Protein Vpu.